The primary structure comprises 161 residues: Transcriptional regulator MraZ (161 aa).

2 consecutive SpoVT-AbrB domains span residues arginine 7–phenylalanine 55 and serine 84–alanine 127.

This sequence belongs to the MraZ family. In terms of assembly, forms oligomers.

It is found in the cytoplasm. The protein resides in the nucleoid. This is Transcriptional regulator MraZ from Parvibaculum lavamentivorans (strain DS-1 / DSM 13023 / NCIMB 13966).